Consider the following 190-residue polypeptide: Large ribosomal subunit protein uL5 (190 aa).

It belongs to the universal ribosomal protein uL5 family. As to quaternary structure, part of the 50S ribosomal subunit; part of the 5S rRNA/L5/L18/L25 subcomplex. Contacts the 5S rRNA and the P site tRNA. Forms a bridge to the 30S subunit in the 70S ribosome.

Its function is as follows. This is one of the proteins that bind and probably mediate the attachment of the 5S RNA into the large ribosomal subunit, where it forms part of the central protuberance. In the 70S ribosome it contacts protein S13 of the 30S subunit (bridge B1b), connecting the 2 subunits; this bridge is implicated in subunit movement. Contacts the P site tRNA; the 5S rRNA and some of its associated proteins might help stabilize positioning of ribosome-bound tRNAs. In Blochmanniella floridana, this protein is Large ribosomal subunit protein uL5.